We begin with the raw amino-acid sequence, 238 residues long: Ribonuclease PH (238 aa).

Phosphate is bound by residues Arg86 and Gly124 to Arg126.

Belongs to the RNase PH family. As to quaternary structure, homohexameric ring arranged as a trimer of dimers.

The enzyme catalyses tRNA(n+1) + phosphate = tRNA(n) + a ribonucleoside 5'-diphosphate. In terms of biological role, phosphorolytic 3'-5' exoribonuclease that plays an important role in tRNA 3'-end maturation. Removes nucleotide residues following the 3'-CCA terminus of tRNAs; can also add nucleotides to the ends of RNA molecules by using nucleoside diphosphates as substrates, but this may not be physiologically important. Probably plays a role in initiation of 16S rRNA degradation (leading to ribosome degradation) during starvation. The protein is Ribonuclease PH of Sphingopyxis alaskensis (strain DSM 13593 / LMG 18877 / RB2256) (Sphingomonas alaskensis).